The primary structure comprises 132 residues: MTMTDPLGDMITRIRNAQLRGKGKVVTPASKLRGWVLDVLAEEGFIRGYARVEYPGGKSDFEIELKYNEGAPVIQMIERVSTPGRRVYSSVKTMPTVHNGLGISILSTPKGIMSDVAAREQNVGGEVLCRVF.

The protein belongs to the universal ribosomal protein uS8 family. As to quaternary structure, part of the 30S ribosomal subunit. Contacts proteins S5 and S12.

Functionally, one of the primary rRNA binding proteins, it binds directly to 16S rRNA central domain where it helps coordinate assembly of the platform of the 30S subunit. In Parvibaculum lavamentivorans (strain DS-1 / DSM 13023 / NCIMB 13966), this protein is Small ribosomal subunit protein uS8.